A 1776-amino-acid polypeptide reads, in one-letter code: 6-methylsalicylic acid synthase (1776 aa).

The segment covering 1-18 (MHSVSPSTYPSGGTSPAP) has biased composition (low complexity). Residues 1-26 (MHSVSPSTYPSGGTSPAPADTPGTEY) are disordered. In terms of domain architecture, Ketosynthase family 3 (KS3) spans 32 to 457 (SNDVAVVGMA…GTVSHAVIEE (426 aa)). Active-site for beta-ketoacyl synthase activity residues include cysteine 204, histidine 339, and histidine 379. Residues 567–880 (VWVFSGHGAQ…IAQLHCRGAE (314 aa)) are malonyl-CoA:ACP transacylase (MAT) domain. Residues 925–1044 (HTLLGQRIPV…AYWDRKVLGS (120 aa)) are N-terminal hotdog fold. The dehydratase (DH) domain stretch occupies residues 925 to 1196 (HTLLGQRIPV…FTAMRFSEIE (272 aa)). Positions 925–1201 (HTLLGQRIPV…FSEIEGTPGV (277 aa)) constitute a PKS/mFAS DH domain. The active-site Proton acceptor; for dehydratase activity is histidine 957. The tract at residues 1058 to 1201 (TTKLADNFSI…FSEIEGTPGV (144 aa)) is C-terminal hotdog fold. Aspartate 1113 serves as the catalytic Proton donor; for dehydratase activity. A product template (PT) domain region spans residues 1205–1657 (MESLVHQIAW…LRSLAIDDGE (453 aa)). Positions 1700 to 1774 (AYLDEKIRGC…HLVVWFAEKI (75 aa)) constitute a Carrier domain. Serine 1734 is subject to O-(pantetheine 4'-phosphoryl)serine.

The protein localises to the cytoplasm. It localises to the cytosol. It catalyses the reaction 3 malonyl-CoA + acetyl-CoA + NADPH + 3 H(+) = 6-methylsalicylate + 3 CO2 + NADP(+) + 4 CoA + H2O. The protein operates within mycotoxin biosynthesis; patulin biosynthesis. Functionally, 6-methylsalicylic acid synthase; part of the gene cluster that mediates the biosynthesis of patulin, an acetate-derived tetraketide mycotoxin produced by several fungal species that shows antimicrobial properties against several bacteria. PatK catalyzes the first step of the pathway which is the synthesis of 6-methylsalicylic acid via condensation of 1 acetate and 3 malonate units. The pathway begins with the synthesis of 6-methylsalicylic acid by the polyketide synthase (PKS) patK via condensation of acetate and malonate units. The 6-methylsalicylic acid decarboxylase patG then catalyzes the decarboxylation of 6-methylsalicylic acid to yield m-cresol (also known as 3-methylphenol). These first reactions occur in the cytosol. The intermediate m-cresol is then transported into the endoplasmic reticulum where the cytochrome P450 monooxygenase patH converts it to m-hydroxybenzyl alcohol, which is further converted to gentisyl alcohol by the cytochrome P450 monooxygenase patI. The oxidoreductases patJ and patO further convert gentisyl alcohol to isoepoxydon in the vacuole. PatN catalyzes then the transformation of isoepoxydon into phyllostine. The cluster protein patF is responsible for the conversion from phyllostine to neopatulin whereas the alcohol dehydrogenase patD converts neopatulin to E-ascladiol. The steps between isoepoxydon and E-ascladiol occur in the cytosol, and E-ascladiol is probably secreted to the extracellular space by one of the cluster-specific transporters patC or patM. Finally, the secreted patulin synthase patE catalyzes the conversion of E-ascladiol to patulin. The polypeptide is 6-methylsalicylic acid synthase (Penicillium expansum (Blue mold rot fungus)).